A 31-amino-acid chain; its full sequence is MESVAYIVVLTMALAVLFFAIAFREPPRIQK.

The chain crosses the membrane as a helical span at residues 3–23; the sequence is SVAYIVVLTMALAVLFFAIAF.

This sequence belongs to the PsbT family. PSII is composed of 1 copy each of membrane proteins PsbA, PsbB, PsbC, PsbD, PsbE, PsbF, PsbH, PsbI, PsbJ, PsbK, PsbL, PsbM, PsbT, PsbX, PsbY, PsbZ, Psb30/Ycf12, peripheral proteins PsbO, CyanoQ (PsbQ), PsbU, PsbV and a large number of cofactors. It forms dimeric complexes.

Its subcellular location is the cellular thylakoid membrane. Found at the monomer-monomer interface of the photosystem II (PS II) dimer, plays a role in assembly and dimerization of PSII. PSII is a light-driven water plastoquinone oxidoreductase, using light energy to abstract electrons from H(2)O, generating a proton gradient subsequently used for ATP formation. This is Photosystem II reaction center protein T from Crocosphaera subtropica (strain ATCC 51142 / BH68) (Cyanothece sp. (strain ATCC 51142)).